Here is a 210-residue protein sequence, read N- to C-terminus: GEM-like protein 7 (210 aa).

The GRAM domain maps to 88–166 (KIYKRLFKVC…CKINGVNQSQ (79 aa)).

The protein belongs to the GEM family.

The chain is GEM-like protein 7 from Arabidopsis thaliana (Mouse-ear cress).